The chain runs to 22 residues: Brevinin-2LTa (22 aa).

As to expression, expressed by the skin glands.

It is found in the secreted. Its function is as follows. Has antibacterial activity. This Rana latastei (Italian agile frog) protein is Brevinin-2LTa.